A 599-amino-acid chain; its full sequence is Adenine deaminase (599 aa).

Belongs to the metallo-dependent hydrolases superfamily. Adenine deaminase family. The cofactor is Mn(2+).

It carries out the reaction adenine + H2O + H(+) = hypoxanthine + NH4(+). The polypeptide is Adenine deaminase (Clostridium botulinum (strain Loch Maree / Type A3)).